Here is a 359-residue protein sequence, read N- to C-terminus: MDRISITLGERSYAIIIANGLLQDPTSFWPLARGDKVLVVTSNYIASLYLEILSQILTELGIIIDLCILPDGEQYKSLAMIDKIFTALLKKYHNNDTTIIAFGGGVIGDLAGFAAANYLRGVRIIQIPTTLLSQVDSSVGGKTAVNHPLGKNMIGTIYQPTSVIIDPNCLATLPRRELSSGLAEVIKYGILFDVNFFNWLELNIDALLGLEPHTVTWCIRRCCEIKAKIVTADEHEKGVRTLLNLGHTYGHAIETHMGYGNWLHGEAVAVGIMIVVQVSCSLGYFSNVDTERVKTLLLRAGLPVIGPMKISLEDYLPYIMRDKKTTNGILHIILPLKLGSAEVHTYRISEWQKLIAHLI.

NAD(+)-binding positions include 71 to 76 (DGEQYK), 105 to 109 (GVIGD), 129 to 130 (TT), K142, K151, and 169 to 172 (CLAT). Zn(2+) is bound by residues E184, H247, and H264.

This sequence belongs to the sugar phosphate cyclases superfamily. Dehydroquinate synthase family. Requires Co(2+) as cofactor. The cofactor is Zn(2+). It depends on NAD(+) as a cofactor.

It is found in the cytoplasm. The enzyme catalyses 7-phospho-2-dehydro-3-deoxy-D-arabino-heptonate = 3-dehydroquinate + phosphate. The protein operates within metabolic intermediate biosynthesis; chorismate biosynthesis; chorismate from D-erythrose 4-phosphate and phosphoenolpyruvate: step 2/7. In terms of biological role, catalyzes the conversion of 3-deoxy-D-arabino-heptulosonate 7-phosphate (DAHP) to dehydroquinate (DHQ). The polypeptide is 3-dehydroquinate synthase (Baumannia cicadellinicola subsp. Homalodisca coagulata).